The primary structure comprises 102 residues: Large ribosomal subunit protein bL21 (102 aa).

This sequence belongs to the bacterial ribosomal protein bL21 family. Part of the 50S ribosomal subunit. Contacts protein L20.

This protein binds to 23S rRNA in the presence of protein L20. The chain is Large ribosomal subunit protein bL21 from Syntrophotalea carbinolica (strain DSM 2380 / NBRC 103641 / GraBd1) (Pelobacter carbinolicus).